Consider the following 376-residue polypeptide: Serpin B6 (376 aa).

The residue at position 1 (M1) is an N-acetylmethionine. S151 bears the Phosphoserine mark. The residue at position 195 (K195) is an N6-acetyllysine.

Belongs to the serpin family. Ov-serpin subfamily. In terms of assembly, forms a complex with the monomeric form of beta-tryptase.

The protein localises to the cytoplasm. Inhibitor of cathepsin G, kallikrein-8 and thrombin. May play an important role in the inner ear in the protection against leakage of lysosomal content during stress. May be involved in the regulation of serine proteinases present in the brain or extravasated from the blood. The polypeptide is Serpin B6 (SERPINB6) (Macaca fascicularis (Crab-eating macaque)).